The sequence spans 188 residues: Elongation factor P (188 aa).

Lys34 is modified (N6-(3,6-diaminohexanoyl)-5-hydroxylysine).

The protein belongs to the elongation factor P family. Post-translationally, may be beta-lysylated on the epsilon-amino group of Lys-34 by the combined action of EpmA and EpmB, and then hydroxylated on the C5 position of the same residue by EpmC (if this protein is present). Lysylation is critical for the stimulatory effect of EF-P on peptide-bond formation. The lysylation moiety may extend toward the peptidyltransferase center and stabilize the terminal 3-CCA end of the tRNA. Hydroxylation of the C5 position on Lys-34 may allow additional potential stabilizing hydrogen-bond interactions with the P-tRNA.

It localises to the cytoplasm. It functions in the pathway protein biosynthesis; polypeptide chain elongation. Involved in peptide bond synthesis. Alleviates ribosome stalling that occurs when 3 or more consecutive Pro residues or the sequence PPG is present in a protein, possibly by augmenting the peptidyl transferase activity of the ribosome. Modification of Lys-34 is required for alleviation. In Aliivibrio fischeri (strain ATCC 700601 / ES114) (Vibrio fischeri), this protein is Elongation factor P.